The chain runs to 146 residues: MSYCKQEGKDCIIFVTKEDHEAPSNAELVEDDPNDPYEDHGLILPNGDINWNCPCLGGMASGPCGQQFKDAFSCFHYSKEEIKGSDCVENFRGMQECMQKYPELYPQEDDNDSAPSGGANTAPTDSLPASSTDSTAAAATENPATS.

3 disulfides stabilise this stretch: C53-C55, C64-C97, and C74-C87. A CHCH domain is found at S61 to Y105. Short sequence motifs (cx9C motif) lie at residues C64–C74 and C87–C97. Positions Y101–S146 are disordered. A compositionally biased stretch (low complexity) spans P123–T140.

Monomer. Can form homooligomers.

It is found in the mitochondrion intermembrane space. Central component of a redox-sensitive mitochondrial intermembrane space import machinery which is required for the biogenesis of respiratory chain complexes. Functions as chaperone and catalyzes the formation of disulfide bonds in substrate proteins, such as COX17 or MICU1. Required for the import and folding of small cysteine-containing proteins (small Tim) in the mitochondrial intermembrane space (IMS). Precursor proteins to be imported into the IMS are translocated in their reduced form into the mitochondria. This Danio rerio (Zebrafish) protein is Mitochondrial intermembrane space import and assembly protein 40 (chchd4).